Here is a 147-residue protein sequence, read N- to C-terminus: Hemoglobin subunit beta (147 aa).

Serine 2 carries the post-translational modification N-acetylserine. The region spanning phenylalanine 3 to histidine 147 is the Globin domain. The residue at position 45 (serine 45) is a Phosphoserine. Position 60 is an N6-acetyllysine (lysine 60). Histidine 64 provides a ligand contact to heme b. Lysine 83 carries the post-translational modification N6-acetyllysine. Histidine 93 contributes to the heme b binding site. Residue cysteine 94 is modified to S-nitrosocysteine.

Belongs to the globin family. In terms of assembly, heterotetramer of two alpha chains and two beta chains. Red blood cells.

Its function is as follows. Involved in oxygen transport from the lung to the various peripheral tissues. The protein is Hemoglobin subunit beta (HBB) of Panthera pardus orientalis (Amur leopard).